The sequence spans 457 residues: Putative methyltransferase MT1451 (457 aa).

S-adenosyl-L-methionine contacts are provided by residues 276-282, E301, D325, and D341; that span reads CAGPGGK. C394 acts as the Nucleophile in catalysis.

Belongs to the class I-like SAM-binding methyltransferase superfamily. RsmB/NOP family.

May act as RNA methyltransferase. The protein is Putative methyltransferase MT1451 of Mycobacterium tuberculosis (strain CDC 1551 / Oshkosh).